The following is a 468-amino-acid chain: Adenosylhomocysteinase (468 aa).

The substrate site is built by Thr-57, Asp-132, and Glu-194. 195-197 (TTT) is an NAD(+) binding site. Substrate is bound by residues Lys-224 and Asp-228. NAD(+)-binding positions include Asn-229, 258–263 (GFGDVG), Glu-281, Asn-316, 337–339 (IGH), and Asn-382.

This sequence belongs to the adenosylhomocysteinase family. It depends on NAD(+) as a cofactor.

Its subcellular location is the cytoplasm. It catalyses the reaction S-adenosyl-L-homocysteine + H2O = L-homocysteine + adenosine. It functions in the pathway amino-acid biosynthesis; L-homocysteine biosynthesis; L-homocysteine from S-adenosyl-L-homocysteine: step 1/1. Its function is as follows. May play a key role in the regulation of the intracellular concentration of adenosylhomocysteine. In Methylorubrum populi (strain ATCC BAA-705 / NCIMB 13946 / BJ001) (Methylobacterium populi), this protein is Adenosylhomocysteinase.